Here is a 505-residue protein sequence, read N- to C-terminus: Lysine--tRNA ligase, heat inducible (505 aa).

N6-acetyllysine is present on residues Lys114 and Lys156. Glu415 and Glu422 together coordinate Mg(2+).

Belongs to the class-II aminoacyl-tRNA synthetase family. In terms of assembly, homodimer. Mg(2+) serves as cofactor.

The protein localises to the cytoplasm. The enzyme catalyses tRNA(Lys) + L-lysine + ATP = L-lysyl-tRNA(Lys) + AMP + diphosphate. This Escherichia coli O6:H1 (strain CFT073 / ATCC 700928 / UPEC) protein is Lysine--tRNA ligase, heat inducible (lysU).